The chain runs to 94 residues: Co-chaperonin GroES (94 aa).

It belongs to the GroES chaperonin family. As to quaternary structure, heptamer of 7 subunits arranged in a ring. Interacts with the chaperonin GroEL.

It is found in the cytoplasm. Together with the chaperonin GroEL, plays an essential role in assisting protein folding. The GroEL-GroES system forms a nano-cage that allows encapsulation of the non-native substrate proteins and provides a physical environment optimized to promote and accelerate protein folding. GroES binds to the apical surface of the GroEL ring, thereby capping the opening of the GroEL channel. The chain is Co-chaperonin GroES from Lactobacillus acidophilus (strain ATCC 700396 / NCK56 / N2 / NCFM).